Here is a 156-residue protein sequence, read N- to C-terminus: Small ribosomal subunit protein uS7 (156 aa).

The protein belongs to the universal ribosomal protein uS7 family. In terms of assembly, part of the 30S ribosomal subunit. Contacts proteins S9 and S11.

Its function is as follows. One of the primary rRNA binding proteins, it binds directly to 16S rRNA where it nucleates assembly of the head domain of the 30S subunit. Is located at the subunit interface close to the decoding center, probably blocks exit of the E-site tRNA. This is Small ribosomal subunit protein uS7 from Microcystis aeruginosa (strain NIES-843 / IAM M-2473).